A 466-amino-acid polypeptide reads, in one-letter code: Replicative helicase loading/DNA remodeling protein DnaB (466 aa).

The DDBH1 stretch occupies residues 3-113; it reads RQAFEFGLRP…ETQFVYQLIQ (111 aa). The DDBH2-1 stretch occupies residues 200 to 292; that stretch reads EMLRQMLGKH…TSSSAGKSSE (93 aa). Residues 293-401 are DDBH2-2; sequence VNPKPQSDEW…QPKNEGSSGN (109 aa).

The protein belongs to the DnaB/DnaD family. In terms of assembly, homotetramer, higher-order oligomers are induced by ssDNA. The DNA replisome assembles sequentially on oriC in this order; DnaA, DnaD, DnaB, DnaI-DnaC helicase. Part of the replication restart primosome, PriA binds first, then DnaD and subsequently DnaB bind.

In terms of biological role, helps DnaI load the DnaC replicative helicase onto single-stranded (ss)DNA. During DNA replication from the origin of replication (oriC) in the DNA replisome, DnaB and DnaD are required after DnaA and before subsequent helicase DnaC loading. Component of the replication restart primosome, which reloads the replicative helicase on sites other than oriC. Essential for replication initiation of the chromosome and plasmids. Remodels DNA, laterally compacts supercoiled plasmid and linear DNA. Binds supercoiled, nicked and linear double-stranded (ds)DNA and phage phiX174 single-stranded (ss)DNA; phiX174 ssDNA is a better substrate than for B.subtilis. No binding to phage M13 ssDNA although it induces oligomers. The chain is Replicative helicase loading/DNA remodeling protein DnaB from Staphylococcus aureus (strain NCTC 8325 / PS 47).